The following is a 337-amino-acid chain: Lipoyl synthase (337 aa).

Positions 81, 86, 92, 107, 111, 114, and 323 each coordinate [4Fe-4S] cluster. One can recognise a Radical SAM core domain in the interval 93–312; the sequence is FSHGTATFMI…EDYGNALGFS (220 aa).

This sequence belongs to the radical SAM superfamily. Lipoyl synthase family. It depends on [4Fe-4S] cluster as a cofactor.

It is found in the cytoplasm. It carries out the reaction [[Fe-S] cluster scaffold protein carrying a second [4Fe-4S](2+) cluster] + N(6)-octanoyl-L-lysyl-[protein] + 2 oxidized [2Fe-2S]-[ferredoxin] + 2 S-adenosyl-L-methionine + 4 H(+) = [[Fe-S] cluster scaffold protein] + N(6)-[(R)-dihydrolipoyl]-L-lysyl-[protein] + 4 Fe(3+) + 2 hydrogen sulfide + 2 5'-deoxyadenosine + 2 L-methionine + 2 reduced [2Fe-2S]-[ferredoxin]. It participates in protein modification; protein lipoylation via endogenous pathway; protein N(6)-(lipoyl)lysine from octanoyl-[acyl-carrier-protein]: step 2/2. In terms of biological role, catalyzes the radical-mediated insertion of two sulfur atoms into the C-6 and C-8 positions of the octanoyl moiety bound to the lipoyl domains of lipoate-dependent enzymes, thereby converting the octanoylated domains into lipoylated derivatives. The polypeptide is Lipoyl synthase (Xanthomonas axonopodis pv. citri (strain 306)).